Reading from the N-terminus, the 137-residue chain is Endoribonuclease YbeY (137 aa).

Zn(2+)-binding residues include His103, His107, and His113.

It belongs to the endoribonuclease YbeY family. Zn(2+) is required as a cofactor.

It localises to the cytoplasm. In terms of biological role, single strand-specific metallo-endoribonuclease involved in late-stage 70S ribosome quality control and in maturation of the 3' terminus of the 16S rRNA. This Acholeplasma laidlawii (strain PG-8A) protein is Endoribonuclease YbeY.